The chain runs to 777 residues: Gliding motility regulatory protein (777 aa).

An HPt domain is found at 1–108; it reads MDTEALKKSL…SDLNEDLSGA (108 aa). Phosphohistidine; by autocatalysis is present on H49. Disordered stretches follow at residues 129–149 and 164–212; these read TPPA…PPAP and PAPV…KSAV. 2 stretches are compositionally biased toward pro residues: residues 139-149 and 164-177; these read VAPPPAPPPAP and PAPV…PPTQ. Low complexity predominate over residues 178–197; that stretch reads APVAEPGAHAAAAAPHPAAA. A Histidine kinase domain is found at 270 to 509; sequence DISNEVREQL…TITLRLPQSL (240 aa). A CheW-like domain is found at 511-645; that stretch reads LMKVLLVRLG…VPDIMAEVRR (135 aa). Residues 660 to 776 enclose the Response regulatory domain; that stretch reads RVLLVDDSPI…EVLAQAIDRL (117 aa). Residue D709 is modified to 4-aspartylphosphate.

It carries out the reaction ATP + protein L-histidine = ADP + protein N-phospho-L-histidine.. FrzE is involved in a sensory transduction pathway that controls the frequency at which cells reverse their gliding direction. FrzE seems to be capable of autophosphorylating itself on a histidine residue and then to transfer that group to an aspartate residue in the C-terminal part of the protein. This Myxococcus xanthus protein is Gliding motility regulatory protein (frzE).